A 397-amino-acid polypeptide reads, in one-letter code: MKKKGLKKTFFVIASLVMGFTLYGYTPVSADAASVKGYYHTQGNKIVDESGKEAAFNGLNWFGLETPNYTLHGLWSRSMDDMLDQVKKEGYNLIRLPYSNQLFDSSSRPDSIDYHKNPDLVGLNPIQIMDKLIEKAGQRGIQIILDRHRPGSGGQSELWYTSQYPESRWISDWKMLADRYKNNPTVIGADLHNEPHGQASWGTGNASTDWRLAAQRAGNAILSVNPNWLILVEGVDHNVQGNNSQYWWGGNLTGVANYPVVLDVPNRVVYSPHDYGPGVSSQPWFNDPAFPSNLPAIWDQTWGYISKQNIAPVLVGEFGGRNVDLSCPEGKWQNALVHYIGANNLYFTYWSLNPNSGDTGGLLLDDWTTWNRPKQDMLGRIMKPVVSVAQQAEAAAE.

The Proton donor role is filled by glutamate 194. Catalysis depends on glutamate 317, which acts as the Nucleophile.

This sequence belongs to the glycosyl hydrolase 5 (cellulase A) family.

It catalyses the reaction Endohydrolysis of (1-&gt;4)-beta-D-glucosidic linkages in cellulose, lichenin and cereal beta-D-glucans.. The polypeptide is Endoglucanase (Paenibacillus polymyxa (Bacillus polymyxa)).